The following is a 547-amino-acid chain: Leiomodin-2 (547 aa).

Residues 1 to 47 (MSTFGYRRGLSKYESIDEDELLASLSAEELKELERELEDIEPDRNLP) form an interaction with tropomyosin alpha region. 3 interaction with actin regions span residues 1 to 161 (MSTF…SDNS), 162 to 497 (KPKI…KEIK), and 521 to 540 (AHENLMEAIRGSSIKQLKRV). Residues Ser11, Ser15, and Ser24 each carry the phosphoserine modification. The stretch at 16–41 (IDEDELLASLSAEELKELERELEDIE) forms a coiled coil. Disordered regions lie at residues 91-162 (KVAE…DNSK) and 352-533 (MDKQ…RGSS). Composition is skewed to acidic residues over residues 95-104 (DKEESEEELI) and 112-139 (VSEEVYTEEEEEESQEEEEEEDSDEEER). Residues 113–148 (SEEVYTEEEEEESQEEEEEEDSDEEERTIETAKGIN) adopt a coiled-coil conformation. The segment covering 149–160 (GTVNYDSVNSDN) has biased composition (polar residues). Residues 352–367 (MDKQRQKRLQEQKQQE) show a composition bias toward basic and acidic residues. The residue at position 400 (Ser400) is a Phosphoserine. Residues 419–449 (ATPPPPPPPPPPPPPSSQRLPPPPPPPPPPL) are compositionally biased toward pro residues. A compositionally biased stretch (polar residues) spans 465-475 (QQESAQRALQN). Positions 477-487 (QKKKKGKKVKK) are enriched in basic residues. Over residues 494–512 (KEIKNSLRSVQEKKMEDSS) the composition is skewed to basic and acidic residues. One can recognise a WH2 domain in the interval 521 to 540 (AHENLMEAIRGSSIKQLKRV).

The protein belongs to the tropomodulin family. As to quaternary structure, can bind at least three actin monomers and thereby provides a nucleus for actin filament formation. Interacts (via N-terminus) with tropomyosin alpha (TPM1) (via N-terminus). May also interact with TPM2 (via N-terminus). Interacts with FLII. In terms of tissue distribution, specifically expressed in heart and skeletal muscles, with higher levels in heart (at protein level). Not expressed in other tissues.

The protein resides in the cytoplasm. It localises to the myofibril. The protein localises to the sarcomere. It is found in the m line. Its subcellular location is the cytoskeleton. Functionally, mediates nucleation of actin filaments and thereby promotes actin polymerization. Plays a role in the regulation of actin filament length. Required for normal sarcomere organization in the heart, and for normal heart function. The sequence is that of Leiomodin-2 (LMOD2) from Homo sapiens (Human).